Reading from the N-terminus, the 374-residue chain is Nucleosome assembly protein 1;3 (374 aa).

The stretch at V26 to E80 forms a coiled coil. S41 is modified (phosphoserine). The Nuclear export signal motif lies at L47–Q62. The short motif at K222–K227 is the Nuclear localization signal element. Residues I299–E339 are compositionally biased toward acidic residues. The interval I299–Q374 is disordered. Residues T343–G355 show a composition bias toward basic residues. The span at Q364–Q374 shows a compositional bias: basic and acidic residues. C371 is modified (cysteine methyl ester). The S-farnesyl cysteine moiety is linked to residue C371. Residues K372–Q374 constitute a propeptide, removed in mature form.

The protein belongs to the nucleosome assembly protein (NAP) family. As to quaternary structure, can form homomeric and heteromeric protein complexes with NAP1;1, NAP1;2 and NAP1;4. Binds histone H2A and associates with chromatin in vivo. Ubiquitous.

The protein localises to the nucleus. It is found in the cytoplasm. May modulate chromatin structure by regulation of nucleosome assembly/disassembly. May function in nucleotide excision repair (NER). Involved in somatic homologous recombination. Could be involved in response to abscisic acid (ABA) and to salt stress. This Arabidopsis thaliana (Mouse-ear cress) protein is Nucleosome assembly protein 1;3 (NAP1;3).